Consider the following 343-residue polypeptide: Phosphatidylglycerol--prolipoprotein diacylglyceryl transferase 1 (343 aa).

4 helical membrane-spanning segments follow: residues 19–39 (VPLR…VWLG), 54–74 (ADIA…YHVI), 93–113 (IWEG…GAWI), and 119–139 (GVPM…AQAI). Residue R141 coordinates a 1,2-diacyl-sn-glycero-3-phospho-(1'-sn-glycerol). 3 helical membrane-spanning segments follow: residues 176 to 196 (HPTF…VIWA), 202 to 224 (LGHG…WIEY), and 238 to 258 (LNNW…VLSA). The interval 269-343 (EPGAETAAGD…TNGADSAKKG (75 aa)) is disordered. Basic and acidic residues predominate over residues 283 to 293 (ADKDVKGTKDA). The segment covering 314-324 (APEDTSGADEA) has biased composition (acidic residues).

The protein belongs to the Lgt family.

It localises to the cell membrane. The catalysed reaction is L-cysteinyl-[prolipoprotein] + a 1,2-diacyl-sn-glycero-3-phospho-(1'-sn-glycerol) = an S-1,2-diacyl-sn-glyceryl-L-cysteinyl-[prolipoprotein] + sn-glycerol 1-phosphate + H(+). It functions in the pathway protein modification; lipoprotein biosynthesis (diacylglyceryl transfer). Catalyzes the transfer of the diacylglyceryl group from phosphatidylglycerol to the sulfhydryl group of the N-terminal cysteine of a prolipoprotein, the first step in the formation of mature lipoproteins. This chain is Phosphatidylglycerol--prolipoprotein diacylglyceryl transferase 1, found in Streptomyces coelicolor (strain ATCC BAA-471 / A3(2) / M145).